The following is an 865-amino-acid chain: Protein translocase subunit SecA (865 aa).

ATP-binding positions include Gln-93, Gly-111–Thr-115, and Asp-501. Zn(2+)-binding residues include Cys-841, Cys-843, Cys-852, and Cys-853.

Belongs to the SecA family. Monomer and homodimer. Part of the essential Sec protein translocation apparatus which comprises SecA, SecYEG and auxiliary proteins SecDF-YajC and YidC. Zn(2+) serves as cofactor.

Its subcellular location is the cell inner membrane. It localises to the cytoplasm. It catalyses the reaction ATP + H2O + cellular proteinSide 1 = ADP + phosphate + cellular proteinSide 2.. Functionally, part of the Sec protein translocase complex. Interacts with the SecYEG preprotein conducting channel. Has a central role in coupling the hydrolysis of ATP to the transfer of proteins into and across the cell membrane, serving as an ATP-driven molecular motor driving the stepwise translocation of polypeptide chains across the membrane. The protein is Protein translocase subunit SecA of Helicobacter acinonychis (strain Sheeba).